A 68-amino-acid chain; its full sequence is Peptide Hp1412 (68 aa).

A signal peptide spans 1 to 23 (MKTHFAIFLITLFLFQMFSQSDA). Cys36 carries the cysteine amide modification. A propeptide spanning residues 40 to 68 (GLSDLYDLDEMFDGEISQADIDFLKELMR) is cleaved from the precursor.

This sequence belongs to the non-disulfide-bridged peptide (NDBP) superfamily. Short antimicrobial peptide (group 4) family. Expressed by the venom gland.

It is found in the secreted. It localises to the target cell membrane. Functionally, amphipathic peptide with antimicrobial activity. This Heterometrus petersii (Asian forest scorpion) protein is Peptide Hp1412.